The chain runs to 186 residues: MGLSDLSKAPGQALGDMLQLGNIESVIQWGRGNSLWPFPFATACCGIEYMSTACSDYDIARFGAERPSFSPRQADMILVLGTITYKMAPVLRQIYDQMAEPKFVISVGACASSGGMFNTYGVLQGVDRILPVDIYVPGCPPRPEAILDALVKLQTKLKTQGLEARRQEVMQKIQELNERNKPLVVR.

The [4Fe-4S] cluster site is built by C44, C45, C110, and C139.

It belongs to the complex I 20 kDa subunit family. In terms of assembly, NDH-1 is composed of 14 different subunits. Subunits NuoB, C, D, E, F, and G constitute the peripheral sector of the complex. [4Fe-4S] cluster is required as a cofactor.

It localises to the cell inner membrane. The enzyme catalyses a quinone + NADH + 5 H(+)(in) = a quinol + NAD(+) + 4 H(+)(out). NDH-1 shuttles electrons from NADH, via FMN and iron-sulfur (Fe-S) centers, to quinones in the respiratory chain. The immediate electron acceptor for the enzyme in this species is believed to be ubiquinone. Couples the redox reaction to proton translocation (for every two electrons transferred, four hydrogen ions are translocated across the cytoplasmic membrane), and thus conserves the redox energy in a proton gradient. This chain is NADH-quinone oxidoreductase subunit B, found in Leptospira borgpetersenii serovar Hardjo-bovis (strain JB197).